Reading from the N-terminus, the 480-residue chain is Aspartyl/glutamyl-tRNA(Asn/Gln) amidotransferase subunit B (480 aa).

Belongs to the GatB/GatE family. GatB subfamily. Heterotrimer of A, B and C subunits.

The enzyme catalyses L-glutamyl-tRNA(Gln) + L-glutamine + ATP + H2O = L-glutaminyl-tRNA(Gln) + L-glutamate + ADP + phosphate + H(+). It carries out the reaction L-aspartyl-tRNA(Asn) + L-glutamine + ATP + H2O = L-asparaginyl-tRNA(Asn) + L-glutamate + ADP + phosphate + 2 H(+). Functionally, allows the formation of correctly charged Asn-tRNA(Asn) or Gln-tRNA(Gln) through the transamidation of misacylated Asp-tRNA(Asn) or Glu-tRNA(Gln) in organisms which lack either or both of asparaginyl-tRNA or glutaminyl-tRNA synthetases. The reaction takes place in the presence of glutamine and ATP through an activated phospho-Asp-tRNA(Asn) or phospho-Glu-tRNA(Gln). This Streptococcus pneumoniae (strain 70585) protein is Aspartyl/glutamyl-tRNA(Asn/Gln) amidotransferase subunit B.